We begin with the raw amino-acid sequence, 311 residues long: 4-diphosphocytidyl-2-C-methyl-D-erythritol kinase (311 aa).

Lys-16 is a catalytic residue. 100–110 (PIGAGLAGGSS) contacts ATP. Residue Asp-142 is part of the active site.

This sequence belongs to the GHMP kinase family. IspE subfamily.

It carries out the reaction 4-CDP-2-C-methyl-D-erythritol + ATP = 4-CDP-2-C-methyl-D-erythritol 2-phosphate + ADP + H(+). Its pathway is isoprenoid biosynthesis; isopentenyl diphosphate biosynthesis via DXP pathway; isopentenyl diphosphate from 1-deoxy-D-xylulose 5-phosphate: step 3/6. Functionally, catalyzes the phosphorylation of the position 2 hydroxy group of 4-diphosphocytidyl-2C-methyl-D-erythritol. This is 4-diphosphocytidyl-2-C-methyl-D-erythritol kinase from Prochlorococcus marinus (strain AS9601).